Consider the following 359-residue polypeptide: DNA polymerase IV (359 aa).

The 181-residue stretch at 4–184 folds into the UmuC domain; sequence IVHVDMDAFY…LKVNRIPGVG (181 aa). The Mg(2+) site is built by Asp8 and Asp102. Residue Glu103 is part of the active site.

Belongs to the DNA polymerase type-Y family. In terms of assembly, monomer. Mg(2+) serves as cofactor.

The protein resides in the cytoplasm. It catalyses the reaction DNA(n) + a 2'-deoxyribonucleoside 5'-triphosphate = DNA(n+1) + diphosphate. Poorly processive, error-prone DNA polymerase involved in untargeted mutagenesis. Copies undamaged DNA at stalled replication forks, which arise in vivo from mismatched or misaligned primer ends. These misaligned primers can be extended by PolIV. Exhibits no 3'-5' exonuclease (proofreading) activity. May be involved in translesional synthesis, in conjunction with the beta clamp from PolIII. The sequence is that of DNA polymerase IV from Xanthomonas oryzae pv. oryzae (strain MAFF 311018).